We begin with the raw amino-acid sequence, 33 residues long: Pheromone biosynthesis-activating neuropeptide (33 aa).

Residues 1–33 (LADDMPATMADQEVYRPEPEQIDSRNKYFSPRL) are disordered. Positions 13-26 (EVYRPEPEQIDSRN) are enriched in basic and acidic residues. Leucine amide is present on Leu33.

The protein belongs to the pyrokinin family.

The protein resides in the secreted. Its function is as follows. Involved in the control of pheromone production in females. In Lymantria dispar (Gypsy moth), this protein is Pheromone biosynthesis-activating neuropeptide.